Here is a 588-residue protein sequence, read N- to C-terminus: Aspartate--tRNA ligase (588 aa).

Glu-177 serves as a coordination point for L-aspartate. The segment at 201–204 (QLFK) is aspartate. An L-aspartate-binding site is contributed by Arg-223. Residues 223–225 (RDE) and Gln-232 each bind ATP. His-451 provides a ligand contact to L-aspartate. ATP is bound at residue Glu-485. Arg-492 lines the L-aspartate pocket. 537 to 540 (GLDR) provides a ligand contact to ATP.

It belongs to the class-II aminoacyl-tRNA synthetase family. Type 1 subfamily. Homodimer.

It localises to the cytoplasm. The catalysed reaction is tRNA(Asp) + L-aspartate + ATP = L-aspartyl-tRNA(Asp) + AMP + diphosphate. Its function is as follows. Catalyzes the attachment of L-aspartate to tRNA(Asp) in a two-step reaction: L-aspartate is first activated by ATP to form Asp-AMP and then transferred to the acceptor end of tRNA(Asp). In Staphylococcus epidermidis (strain ATCC 35984 / DSM 28319 / BCRC 17069 / CCUG 31568 / BM 3577 / RP62A), this protein is Aspartate--tRNA ligase.